A 946-amino-acid chain; its full sequence is Translation initiation factor IF-2 (946 aa).

2 disordered regions span residues 58 to 250 (AERK…AVVI) and 301 to 324 (VSRD…KSLS). Composition is skewed to low complexity over residues 102–165 (EPPQ…QPAA) and 174–185 (AQPSAPQPAAAQ). A compositionally biased stretch (pro residues) spans 186–211 (PRPPQPPMPSRPPPAGYRPAPPPGAR). The span at 212 to 229 (PPMSAAPGAPAQPGAAAQ) shows a compositional bias: low complexity. The 170-residue stretch at 445 to 614 (IRPPVVTVMG…ALQSEVLELK (170 aa)) folds into the tr-type G domain. Positions 454-461 (GHVDHGKT) are G1. A GTP-binding site is contributed by 454–461 (GHVDHGKT). The interval 479–483 (GITQH) is G2. The segment at 500–503 (DTPG) is G3. GTP is bound by residues 500-504 (DTPGH) and 554-557 (NKVD). Residues 554 to 557 (NKVD) are G4. The interval 590–592 (SAR) is G5.

Belongs to the TRAFAC class translation factor GTPase superfamily. Classic translation factor GTPase family. IF-2 subfamily.

It localises to the cytoplasm. Functionally, one of the essential components for the initiation of protein synthesis. Protects formylmethionyl-tRNA from spontaneous hydrolysis and promotes its binding to the 30S ribosomal subunits. Also involved in the hydrolysis of GTP during the formation of the 70S ribosomal complex. The polypeptide is Translation initiation factor IF-2 (Anaeromyxobacter sp. (strain K)).